The chain runs to 511 residues: Protein phosphatase 2C 16 (511 aa).

The first 22 residues, 1–22 (MEEMTPAVAMTLSLAANTMCES), serve as a signal peptide directing secretion. One can recognise a PPM-type phosphatase domain in the interval 189 to 501 (LWGTVSIQGN…DNISIIVIDL (313 aa)). Positions 243, 244, 432, and 492 each coordinate Mn(2+).

Belongs to the PP2C family. Interacts with SWI3B (via N-terminus). Interacts with ABA-bounded PYR1, PYL1, PYL2, PYL3, PYL4, PYL5, PYL6, PYL8 and PYL9, and with free PYL2, PYL3, PYL4, PYL10 and PYL13. Mg(2+) is required as a cofactor. It depends on Mn(2+) as a cofactor. Expressed in seeds, roots, stems, leaves and flowers, especially in meristematic tissues, guard cells, embryo and siliques.

It is found in the cytoplasm. The protein localises to the nucleus. The catalysed reaction is O-phospho-L-seryl-[protein] + H2O = L-seryl-[protein] + phosphate. It catalyses the reaction O-phospho-L-threonyl-[protein] + H2O = L-threonyl-[protein] + phosphate. Repressed by PYR/PYL/RCAR ABA receptors in an ABA-dependent manner. Functionally, key component and repressor of the abscisic acid (ABA) signaling pathway that regulates numerous ABA responses, such as stomatal closure, seed germination and inhibition of vegetative growth. Confers enhanced sensitivity to drought. This Arabidopsis thaliana (Mouse-ear cress) protein is Protein phosphatase 2C 16 (HAB1).